We begin with the raw amino-acid sequence, 280 residues long: BURP domain protein USPL1 (280 aa).

Residues 1-24 form the signal peptide; that stretch reads MASTFRLSISFLTLILFSLWVVEA. Positions 58-280 constitute a BURP domain; that stretch reads YFTLNDLKLG…PLDNIVWVTK (223 aa).

In terms of tissue distribution, expressed in cotyledons, radicle, floral buds, open flowers, roots and developing seeds, but not in leaves. Highly expressed in the root tips. Detected in young leaves, hypocotyls, stems and mature seed funiculum.

It localises to the protein storage vacuole. The protein localises to the golgi apparatus. The protein resides in the golgi stack. Its subcellular location is the trans-Golgi network. It is found in the prevacuolar compartment. Functionally, associated with the protein storage vacuole formation. The chain is BURP domain protein USPL1 from Arabidopsis thaliana (Mouse-ear cress).